A 55-amino-acid chain; its full sequence is ATP synthase protein 8 (55 aa).

Residues Asn-7–Ile-24 form a helical membrane-spanning segment. Residues Asn-35–Thr-55 form a disordered region. The segment covering Pro-37 to Thr-55 has biased composition (low complexity).

The protein belongs to the ATPase protein 8 family. As to quaternary structure, F-type ATPases have 2 components, CF(1) - the catalytic core - and CF(0) - the membrane proton channel.

The protein localises to the mitochondrion membrane. Functionally, mitochondrial membrane ATP synthase (F(1)F(0) ATP synthase or Complex V) produces ATP from ADP in the presence of a proton gradient across the membrane which is generated by electron transport complexes of the respiratory chain. F-type ATPases consist of two structural domains, F(1) - containing the extramembraneous catalytic core and F(0) - containing the membrane proton channel, linked together by a central stalk and a peripheral stalk. During catalysis, ATP synthesis in the catalytic domain of F(1) is coupled via a rotary mechanism of the central stalk subunits to proton translocation. Part of the complex F(0) domain. Minor subunit located with subunit a in the membrane. This chain is ATP synthase protein 8 (MT-ATP8), found in Corythaeola cristata (Great blue turaco).